The primary structure comprises 244 residues: 5-oxoprolinase subunit A (244 aa).

It belongs to the LamB/PxpA family. In terms of assembly, forms a complex composed of PxpA, PxpB and PxpC.

It carries out the reaction 5-oxo-L-proline + ATP + 2 H2O = L-glutamate + ADP + phosphate + H(+). Catalyzes the cleavage of 5-oxoproline to form L-glutamate coupled to the hydrolysis of ATP to ADP and inorganic phosphate. This is 5-oxoprolinase subunit A from Escherichia coli O6:K15:H31 (strain 536 / UPEC).